The chain runs to 139 residues: D-ribose pyranase (139 aa).

H20 serves as the catalytic Proton donor. Substrate-binding positions include D28, H106, and 128 to 130 (YAN).

This sequence belongs to the RbsD / FucU family. RbsD subfamily. In terms of assembly, homodecamer.

The protein localises to the cytoplasm. It catalyses the reaction beta-D-ribopyranose = beta-D-ribofuranose. Its pathway is carbohydrate metabolism; D-ribose degradation; D-ribose 5-phosphate from beta-D-ribopyranose: step 1/2. In terms of biological role, catalyzes the interconversion of beta-pyran and beta-furan forms of D-ribose. This is D-ribose pyranase from Histophilus somni (strain 129Pt) (Haemophilus somnus).